The chain runs to 142 residues: Hemoglobin subunit alpha-1/2 (142 aa).

The Globin domain occupies 2–142 (VLSADDKTNI…VSTVLTSKYR (141 aa)). Ser4 carries the phosphoserine modification. Lys8 is subject to N6-succinyllysine. Thr9 is modified (phosphothreonine). N6-succinyllysine is present on Lys12. N6-acetyllysine; alternate is present on Lys17. Lys17 bears the N6-succinyllysine; alternate mark. Position 25 is a phosphotyrosine (Tyr25). N6-succinyllysine is present on Lys41. Phosphoserine is present on Ser50. His59 is an O2 binding site. His88 is a heme b binding site. Ser103 bears the Phosphoserine mark. Phosphothreonine is present on Thr109. Phosphoserine is present on residues Ser125 and Ser132. Phosphothreonine is present on residues Thr135 and Thr138. Phosphoserine is present on Ser139.

Belongs to the globin family. Heterotetramer of two alpha chains and two beta chains. In terms of tissue distribution, red blood cells.

Its function is as follows. Involved in oxygen transport from the lung to the various peripheral tissues. Functionally, hemopressin acts as an antagonist peptide of the cannabinoid receptor CNR1. Hemopressin-binding efficiently blocks cannabinoid receptor CNR1 and subsequent signaling. In Rattus norvegicus (Rat), this protein is Hemoglobin subunit alpha-1/2 (Hba1).